The chain runs to 232 residues: Izumo sperm-egg fusion protein 4 (232 aa).

The first 15 residues, 1–15 (MALLLCLVCLTAALA), serve as a signal peptide directing secretion. N-linked (GlcNAc...) asparagine glycosylation is found at Asn24 and Asn219.

The protein belongs to the Izumo family. In terms of tissue distribution, detected in sperm.

The protein resides in the secreted. This Homo sapiens (Human) protein is Izumo sperm-egg fusion protein 4 (IZUMO4).